A 71-amino-acid chain; its full sequence is Small ribosomal subunit protein bS21 (71 aa).

The span at 50 to 59 (AAAVKRHAKK) shows a compositional bias: basic residues. A disordered region spans residues 50–71 (AAAVKRHAKKVQREQRRAVRLY). Residues 60–71 (VQREQRRAVRLY) are compositionally biased toward basic and acidic residues.

Belongs to the bacterial ribosomal protein bS21 family.

The protein is Small ribosomal subunit protein bS21 of Pseudomonas fluorescens (strain ATCC BAA-477 / NRRL B-23932 / Pf-5).